Consider the following 264-residue polypeptide: uncharacterized protein (264 aa).

Histidine 7, histidine 9, glutamate 102, histidine 138, histidine 163, and aspartate 213 together coordinate a divalent metal cation.

It belongs to the metallo-dependent hydrolases superfamily. TatD-type hydrolase family. It depends on a divalent metal cation as a cofactor.

This is an uncharacterized protein from Buchnera aphidicola subsp. Acyrthosiphon pisum (strain APS) (Acyrthosiphon pisum symbiotic bacterium).